The primary structure comprises 285 residues: Isoprenyl transferase 2 (285 aa).

The disordered stretch occupies residues 11-30 (RREYRAPEPHPSGARAPKLP). Asp43 is an active-site residue. Asp43 is a Mg(2+) binding site. Residues 44-47 (GNGR), Trp48, Arg56, His60, and 88-90 (STE) contribute to the substrate site. Asn91 acts as the Proton acceptor in catalysis. Substrate is bound by residues Trp92, Arg94, Arg211, and 217-219 (RTS). Glu230 is a binding site for Mg(2+).

It belongs to the UPP synthase family. In terms of assembly, homodimer. Mg(2+) is required as a cofactor.

Functionally, catalyzes the condensation of isopentenyl diphosphate (IPP) with allylic pyrophosphates generating different type of terpenoids. The chain is Isoprenyl transferase 2 from Streptomyces avermitilis (strain ATCC 31267 / DSM 46492 / JCM 5070 / NBRC 14893 / NCIMB 12804 / NRRL 8165 / MA-4680).